A 501-amino-acid chain; its full sequence is Glutamyl-tRNA(Gln) amidotransferase subunit A (501 aa).

Residues K80 and S155 each act as charge relay system in the active site. S179 (acyl-ester intermediate) is an active-site residue.

This sequence belongs to the amidase family. GatA subfamily. Heterotrimer of A, B and C subunits.

The enzyme catalyses L-glutamyl-tRNA(Gln) + L-glutamine + ATP + H2O = L-glutaminyl-tRNA(Gln) + L-glutamate + ADP + phosphate + H(+). Its function is as follows. Allows the formation of correctly charged Gln-tRNA(Gln) through the transamidation of misacylated Glu-tRNA(Gln) in organisms which lack glutaminyl-tRNA synthetase. The reaction takes place in the presence of glutamine and ATP through an activated gamma-phospho-Glu-tRNA(Gln). The polypeptide is Glutamyl-tRNA(Gln) amidotransferase subunit A (Cupriavidus necator (strain ATCC 17699 / DSM 428 / KCTC 22496 / NCIMB 10442 / H16 / Stanier 337) (Ralstonia eutropha)).